Reading from the N-terminus, the 327-residue chain is Glycerol-3-phosphate dehydrogenase [NAD(P)+] (327 aa).

NADPH is bound by residues Trp11, His30, and Lys103. 3 residues coordinate sn-glycerol 3-phosphate: Lys103, Gly131, and Ser133. Residue Ala135 coordinates NADPH. The sn-glycerol 3-phosphate site is built by Lys186, Asp243, Ser253, Arg254, and Asn255. Catalysis depends on Lys186, which acts as the Proton acceptor. Arg254 is an NADPH binding site. 2 residues coordinate NADPH: Val281 and Glu283.

This sequence belongs to the NAD-dependent glycerol-3-phosphate dehydrogenase family.

The protein resides in the cytoplasm. It catalyses the reaction sn-glycerol 3-phosphate + NAD(+) = dihydroxyacetone phosphate + NADH + H(+). The catalysed reaction is sn-glycerol 3-phosphate + NADP(+) = dihydroxyacetone phosphate + NADPH + H(+). It participates in membrane lipid metabolism; glycerophospholipid metabolism. Catalyzes the reduction of the glycolytic intermediate dihydroxyacetone phosphate (DHAP) to sn-glycerol 3-phosphate (G3P), the key precursor for phospholipid synthesis. The chain is Glycerol-3-phosphate dehydrogenase [NAD(P)+] from Wolbachia sp. subsp. Brugia malayi (strain TRS).